Here is a 105-residue protein sequence, read N- to C-terminus: Multidrug resistance protein EbrA (105 aa).

4 consecutive transmembrane segments (helical) span residues 2–22 (IAGYIFLLIAILSEAAAAAML), 35–55 (VLVVIGYGLAFYMMSLTLQVI), 60–80 (SYATWSGAGTVLTAIIGVLWF), and 87–104 (RNIAGIICLVSGVVLINL).

The protein belongs to the drug/metabolite transporter (DMT) superfamily. Small multidrug resistance (SMR) (TC 2.A.7.1) family. EbrA/EbrB subfamily. The efflux pump is composed of EbrA and EbrB.

The protein resides in the cell membrane. Part of a multidrug efflux pump. Confers resistance to cationic lipophilic dyes such as ethidium bromide, acriflavine, pyronine Y and safranin O. The efflux is probably coupled to an influx of protons. The polypeptide is Multidrug resistance protein EbrA (ebrA) (Bacillus licheniformis (strain ATCC 14580 / DSM 13 / JCM 2505 / CCUG 7422 / NBRC 12200 / NCIMB 9375 / NCTC 10341 / NRRL NRS-1264 / Gibson 46)).